The following is a 240-amino-acid chain: Large ribosomal subunit protein uL2 (240 aa).

The span at 1–10 (MGHRISTQSR) shows a compositional bias: polar residues. Disordered regions lie at residues 1–20 (MGHRISTQSRGKGGPTYRAP) and 204–240 (FGGGGHQHPGKPKTVARGASPGRKVGSVAARRTGYRR).

Belongs to the universal ribosomal protein uL2 family. Part of the 50S ribosomal subunit. Forms a bridge to the 30S subunit in the 70S ribosome.

In terms of biological role, one of the primary rRNA binding proteins. Required for association of the 30S and 50S subunits to form the 70S ribosome, for tRNA binding and peptide bond formation. It has been suggested to have peptidyltransferase activity; this is somewhat controversial. Makes several contacts with the 16S rRNA in the 70S ribosome. This Methanocorpusculum labreanum (strain ATCC 43576 / DSM 4855 / Z) protein is Large ribosomal subunit protein uL2.